A 482-amino-acid polypeptide reads, in one-letter code: Dual specificity protein phosphatase 10 (482 aa).

In terms of domain architecture, Rhodanese spans 168–285; sequence PSQGPVIIDC…FKQNHENLCD (118 aa). The segment at 199 to 215 is interaction with MAP kinases; it reads KISRRRLQQGKITVLDL. Positions 321-464 constitute a Tyrosine-protein phosphatase domain; sequence ELTPILPFLF…LLEFEEDLNN (144 aa). Catalysis depends on C408, which acts as the Phosphocysteine intermediate.

It belongs to the protein-tyrosine phosphatase family. Non-receptor class dual specificity subfamily. In terms of assembly, monomer. Interacts with MAPK14. Expressed in keratinocytes (at protein level). Detected in brain.

It localises to the cytoplasm. It is found in the nucleus. The catalysed reaction is O-phospho-L-tyrosyl-[protein] + H2O = L-tyrosyl-[protein] + phosphate. It catalyses the reaction O-phospho-L-seryl-[protein] + H2O = L-seryl-[protein] + phosphate. The enzyme catalyses O-phospho-L-threonyl-[protein] + H2O = L-threonyl-[protein] + phosphate. Its function is as follows. Protein phosphatase involved in the inactivation of MAP kinases. Has a specificity for the MAPK11/MAPK12/MAPK13/MAPK14 subfamily. It preferably dephosphorylates p38. This chain is Dual specificity protein phosphatase 10 (DUSP10), found in Homo sapiens (Human).